A 212-amino-acid chain; its full sequence is MSKGFLVSLEGPEGAGKTSVLEALLPILEEKGVEVLTTREPGGVLIGEKIREVILDPSHTQMDAKTELLLYIASRRQHLVEKVLPALEAGKLVIMDRFIDSSVAYQGFGRGLDIEAIDWLNQFATDGLKPDLTLYFDIEVEEGLARIAANSDREVNRLDLEGLDLHKKVRQGYLSLLDKEGNRIVKIDASLPLEQVVETTNAVLFDGMGLAK.

11-18 provides a ligand contact to ATP; that stretch reads GPEGAGKT.

Belongs to the thymidylate kinase family.

The enzyme catalyses dTMP + ATP = dTDP + ADP. In terms of biological role, phosphorylation of dTMP to form dTDP in both de novo and salvage pathways of dTTP synthesis. This Streptococcus pneumoniae serotype 2 (strain D39 / NCTC 7466) protein is Thymidylate kinase.